The primary structure comprises 407 residues: Lysosome-associated membrane glycoprotein 1 (407 aa).

The signal sequence occupies residues 1–21 (MAAPGAPRSLLLLLLAGLAHG). The interval 22–189 (ASALFVVKDS…SKEETRCTQD (168 aa)) is first lumenal domain. The Lumenal portion of the chain corresponds to 22–371 (ASALFVVKDS…VEECMQDGNN (350 aa)). N-linked (GlcNAc...) asparagine glycans are attached at residues Asn32, Asn40, Asn57, Asn72, Asn79, Asn98, Asn102, Asn116, Asn125, Asn145, Asn160, and Asn178. Residues Cys36 and Cys75 are joined by a disulfide bond. Cys150 and Cys186 form a disulfide bridge. Residues 183 to 206 (ETRCTQDGPSPTTVPPSPSPPLVP) form a disordered region. The interval 190–219 (GPSPTTVPPSPSPPLVPTNPTVIKYNVTGE) is hinge. Residues 194 to 206 (TTVPPSPSPPLVP) show a composition bias toward pro residues. N-linked (GlcNAc...) asparagine glycans are attached at residues Asn215, Asn220, Asn233, Asn241, Asn253, Asn283, Asn297, Asn304, and Asn312. The second lumenal domain stretch occupies residues 220-371 (NGTCLLASMA…VEECMQDGNN (152 aa)). A disulfide bond links Cys223 and Cys260. A disulfide bond links Cys328 and Cys365. Residues 372–395 (MLIPIAVGGALAGLVLIVLIAYLI) traverse the membrane as a helical segment. At 396–407 (GRKRSHAGYQTI) the chain is on the cytoplasmic side.

The protein belongs to the LAMP family. Interacts with ABCB9; this interaction strongly stabilizes ABCB9 and protects ABCB9 against lysosomal degradation. Interacts with FURIN. Interacts with TMEM175; inhibiting the proton channel activity of TMEM175. In terms of processing, O- and N-glycosylated; some of the N-glycans attached to LAMP-1 are polylactosaminoglycans.

It is found in the lysosome membrane. Its subcellular location is the endosome membrane. The protein localises to the late endosome membrane. It localises to the cell membrane. The protein resides in the cytolytic granule membrane. Functionally, lysosomal membrane glycoprotein which plays an important role in lysosome biogenesis, lysosomal pH regulation, autophagy and cholesterol homeostasis. Acts as an important regulator of lysosomal lumen pH regulation by acting as a direct inhibitor of the proton channel TMEM175, facilitating lysosomal acidification for optimal hydrolase activity. Also plays an important role in NK-cells cytotoxicity. Mechanistically, participates in cytotoxic granule movement to the cell surface and perforin trafficking to the lytic granule. In addition, protects NK-cells from degranulation-associated damage induced by their own cytotoxic granule content. Presents carbohydrate ligands to selectins. This is Lysosome-associated membrane glycoprotein 1 (LAMP1) from Cricetulus griseus (Chinese hamster).